We begin with the raw amino-acid sequence, 260 residues long: tRNA1(Val) (adenine(37)-N6)-methyltransferase (260 aa).

This sequence belongs to the methyltransferase superfamily. tRNA (adenine-N(6)-)-methyltransferase family.

It localises to the cytoplasm. The catalysed reaction is adenosine(37) in tRNA1(Val) + S-adenosyl-L-methionine = N(6)-methyladenosine(37) in tRNA1(Val) + S-adenosyl-L-homocysteine + H(+). Functionally, specifically methylates the adenine in position 37 of tRNA(1)(Val) (anticodon cmo5UAC). The polypeptide is tRNA1(Val) (adenine(37)-N6)-methyltransferase (Serratia proteamaculans (strain 568)).